A 175-amino-acid polypeptide reads, in one-letter code: METNCPNILYLSGITIEECLQSKKTATDTLNTNDDEAEVEKKLPSVFTTVSKWVTHSSFKCWTCHLYFKTVPKFVPTYMRENERGEIEMGVLGNFCSFSCAASYVDVHYTEPKRWEARELLNMLYRFFTSQWISYIKPAPSYTMRKEYGGKLSEEAFISELHTLEESISSKHIFI.

This sequence belongs to the asfivirus B175L family.

This is an uncharacterized protein from Ornithodoros (relapsing fever ticks).